A 1291-amino-acid chain; its full sequence is Vacuolating cytotoxin autotransporter (1291 aa).

The first 33 residues, M1–A33, serve as a signal peptide directing secretion. Residues P326–E374 are disordered. Composition is skewed to polar residues over residues K338–A347 and S354–E374. Positions K1018 to F1291 constitute an Autotransporter domain.

It localises to the periplasm. Its subcellular location is the secreted. It is found in the cell surface. The protein resides in the cell outer membrane. Induces vacuolation of eukaryotic cells. Causes ulceration and gastric lesions. This Helicobacter pylori (Campylobacter pylori) protein is Vacuolating cytotoxin autotransporter (vacA).